Consider the following 65-residue polypeptide: Large ribosomal subunit protein bL35c (65 aa).

Over residues 25 to 44 (HKASKSHLLQKKSSKQRRHL) the composition is skewed to basic residues. The tract at residues 25 to 45 (HKASKSHLLQKKSSKQRRHLS) is disordered.

It belongs to the bacterial ribosomal protein bL35 family.

Its subcellular location is the plastid. It localises to the chloroplast. The protein is Large ribosomal subunit protein bL35c of Pyropia yezoensis (Susabi-nori).